The primary structure comprises 310 residues: Conjugation stage-specific protein (310 aa).

The protein belongs to the archaeal Rpo3/eukaryotic RPB3 RNA polymerase subunit family.

The protein localises to the nucleus. Its function is as follows. May be a stage-specific RNA polymerase subunit. The sequence is that of Conjugation stage-specific protein (CNJC) from Tetrahymena thermophila.